The following is a 179-amino-acid chain: Large ribosomal subunit protein uL5 (179 aa).

The protein belongs to the universal ribosomal protein uL5 family. In terms of assembly, part of the 50S ribosomal subunit; part of the 5S rRNA/L5/L18/L25 subcomplex. Contacts the 5S rRNA and the P site tRNA. Forms a bridge to the 30S subunit in the 70S ribosome.

Its function is as follows. This is one of the proteins that bind and probably mediate the attachment of the 5S RNA into the large ribosomal subunit, where it forms part of the central protuberance. In the 70S ribosome it contacts protein S13 of the 30S subunit (bridge B1b), connecting the 2 subunits; this bridge is implicated in subunit movement. Contacts the P site tRNA; the 5S rRNA and some of its associated proteins might help stabilize positioning of ribosome-bound tRNAs. The polypeptide is Large ribosomal subunit protein uL5 (Vibrio campbellii (strain ATCC BAA-1116)).